The primary structure comprises 439 residues: Xylose isomerase (439 aa).

Catalysis depends on residues His-99 and Asp-102. Glu-230, Glu-266, His-269, Asp-294, Asp-305, Asp-307, and Asp-337 together coordinate Mg(2+).

Belongs to the xylose isomerase family. In terms of assembly, homotetramer. It depends on Mg(2+) as a cofactor.

The protein localises to the cytoplasm. It catalyses the reaction alpha-D-xylose = alpha-D-xylulofuranose. This is Xylose isomerase from Shouchella clausii (strain KSM-K16) (Alkalihalobacillus clausii).